A 355-amino-acid chain; its full sequence is MKKNKRLMVMAGGTGGHVFPGLAVAKKLQQQGWEIRWLGTADRMEAELVPKHGIDIDFIKVKGLRGQGIKRLVLAPFQILNAIFQAKAHIKRWQPDAVLGMGGYVSGPGGIAAWLSGIPVVLHEQNAVAGLTNHWLAKIAKKVFQAFPGAFKDAPVVGNPVREDVVALPDPMQRMQDREGAVRILVMGGSQGARILNQTMPQVMAQLGSGFEIRHQAGKGSADEVRLAYQQVGVEHVEVSEFIDDVAAQYAWADLLVCRSGALTVSEVSAAGVGAIFIPFMHKDRQQALNADHLVACGAALMIEQPQLTVDKLAGEIQKLGRDTLLSMALHARAAAQNNADQVVADAIVALTEQK.

UDP-N-acetyl-alpha-D-glucosamine contacts are provided by residues 14–16 (TGG), Asn-126, Arg-162, Ser-190, Ile-243, 262–267 (ALTVSE), and Gln-287.

Belongs to the glycosyltransferase 28 family. MurG subfamily.

The protein localises to the cell inner membrane. It catalyses the reaction di-trans,octa-cis-undecaprenyl diphospho-N-acetyl-alpha-D-muramoyl-L-alanyl-D-glutamyl-meso-2,6-diaminopimeloyl-D-alanyl-D-alanine + UDP-N-acetyl-alpha-D-glucosamine = di-trans,octa-cis-undecaprenyl diphospho-[N-acetyl-alpha-D-glucosaminyl-(1-&gt;4)]-N-acetyl-alpha-D-muramoyl-L-alanyl-D-glutamyl-meso-2,6-diaminopimeloyl-D-alanyl-D-alanine + UDP + H(+). It participates in cell wall biogenesis; peptidoglycan biosynthesis. Functionally, cell wall formation. Catalyzes the transfer of a GlcNAc subunit on undecaprenyl-pyrophosphoryl-MurNAc-pentapeptide (lipid intermediate I) to form undecaprenyl-pyrophosphoryl-MurNAc-(pentapeptide)GlcNAc (lipid intermediate II). The polypeptide is UDP-N-acetylglucosamine--N-acetylmuramyl-(pentapeptide) pyrophosphoryl-undecaprenol N-acetylglucosamine transferase (Vibrio vulnificus (strain YJ016)).